The primary structure comprises 88 residues: Potassium channel toxin MeuTXKbeta3-meucin-24 (88 aa).

Residues 1–22 (MMKQQFFLFLAVIVMISSVIEA) form the signal peptide. A BetaSPN-type CS-alpha/beta domain is found at 55-88 (EYACPVIEKWCEDHCQAKNAIGRCENTECKCLSK). 3 cysteine pairs are disulfide-bonded: C58–C78, C65–C83, and C69–C85.

Belongs to the long chain scorpion toxin family. Class 2 subfamily. As to expression, expressed by the venom gland.

The protein resides in the secreted. Functionally, inhibits voltage-gated potassium channels. The synthetic meucin-24 inhibits the development of P.berghei ookinetes, kills intraerythrocytic P.falciparum, and is cytotoxic to the Drosophila S2 cells at micromolar concentrations. No antibacterial, antifungal and hemolytic activities have been found at micromolar concentrations. The polypeptide is Potassium channel toxin MeuTXKbeta3-meucin-24 (Mesobuthus eupeus (Lesser Asian scorpion)).